Here is a 363-residue protein sequence, read N- to C-terminus: Histidinol-phosphate aminotransferase (363 aa).

The residue at position 220 (lysine 220) is an N6-(pyridoxal phosphate)lysine.

It belongs to the class-II pyridoxal-phosphate-dependent aminotransferase family. Histidinol-phosphate aminotransferase subfamily. Homodimer. It depends on pyridoxal 5'-phosphate as a cofactor.

The catalysed reaction is L-histidinol phosphate + 2-oxoglutarate = 3-(imidazol-4-yl)-2-oxopropyl phosphate + L-glutamate. Its pathway is amino-acid biosynthesis; L-histidine biosynthesis; L-histidine from 5-phospho-alpha-D-ribose 1-diphosphate: step 7/9. The polypeptide is Histidinol-phosphate aminotransferase (Paramagnetospirillum magneticum (strain ATCC 700264 / AMB-1) (Magnetospirillum magneticum)).